We begin with the raw amino-acid sequence, 242 residues long: Linker for activation of T-cells family member 1 (242 aa).

The Extracellular segment spans residues 1 to 4; that stretch reads MEAD. A helical; Signal-anchor for type III membrane protein membrane pass occupies residues 5–28; sequence ALSPVGLGLLLLPFLVTLLAALCV. Residues Cys-27 and Cys-30 are each lipidated (S-palmitoyl cysteine). At 29-242 the chain is on the cytoplasmic side; sequence RCRELPVSYD…PDYENLQELN (214 aa). Position 40 is a phosphothreonine (Thr-40). Residues Ser-41, Ser-44, Ser-87, Ser-104, Ser-109, and Ser-112 each carry the phosphoserine modification. Residues 78-118 are disordered; sequence QPDLLPIPRSPQPLGGSHRMPSSQQNSDDANSVASYENQEP. Residues 97-115 are compositionally biased toward polar residues; it reads MPSSQQNSDDANSVASYEN. The tract at residues 136–139 is interaction with PLCG1; it reads YLVV. Tyr-175 carries the phosphotyrosine modification. Interaction with GRB2, GRAP2 and PIK3R1 regions lie at residues 175-178 and 195-198; these read YVNV. The disordered stretch occupies residues 176 to 242; the sequence is VNVPESEESA…PDYENLQELN (67 aa). Residues Ser-199, Ser-212, and Ser-215 each carry the phosphoserine modification. Residues 217–234 are compositionally biased toward acidic residues; the sequence is EVEDEGEEEGVDGEEAPD. Tyr-235 carries the post-translational modification Phosphotyrosine.

As to quaternary structure, when phosphorylated, interacts directly with the PIK3R1 subunit of phosphoinositide 3-kinase and the SH2 domains of GRB2, GRAP, GRAP2, PLCG1 and PLCG2. Interacts indirectly with CBL, SOS, VAV, and LCP2. Interacts with SHB and SKAP2. Interacts with FCGR1A. Interacts with CLNK. Interacts with GRB2, PLCG1 and THEMIS upon TCR activation in thymocytes. Interacts with THEMIS2. In terms of processing, phosphorylated on tyrosines by ZAP70 upon TCR activation, or by SYK upon other immunoreceptor activation; which leads to the recruitment of multiple signaling molecules. Is one of the most prominently tyrosine-phosphorylated proteins detected following TCR engagement. May be dephosphorylated by PTPRJ. Phosphorylated by ITK leading to the recruitment of VAV1 to LAT-containing complexes. Post-translationally, palmitoylation of Cys-27 and Cys-30 is required for raft targeting and efficient phosphorylation. Phosphorylated on tyrosines by ZAP70 upon TCR activation, or by SYK upon other immunoreceptor activation; which leads to the recruitment of multiple signaling molecules. Is one of the most prominently tyrosine-phosphorylated proteins detected following TCR engagement. May be dephosphorylated by PTPRJ. Phosphorylated by ITK leading to the recruitment of VAV1 to LAT-containing complexes. In terms of processing, 'Lys-63'-linked ubiquitinated by TRAF6. Expressed in T-cells and mast cells.

The protein localises to the cell membrane. Required for TCR (T-cell antigen receptor)- and pre-TCR-mediated signaling, both in mature T-cells and during their development. Involved in FCGR3 (low affinity immunoglobulin gamma Fc region receptor III)-mediated signaling in natural killer cells and FCER1 (high affinity immunoglobulin epsilon receptor)-mediated signaling in mast cells. Couples activation of these receptors and their associated kinases with distal intracellular events such as mobilization of intracellular calcium stores, PKC activation, MAPK activation or cytoskeletal reorganization through the recruitment of PLCG1, GRB2, GRAP2, and other signaling molecules. This is Linker for activation of T-cells family member 1 (Lat) from Mus musculus (Mouse).